A 2258-amino-acid chain; its full sequence is Probable serine/threonine-protein kinase ifkA (2258 aa).

Disordered regions lie at residues 43–108 (RVNS…HQMG) and 189–308 (EMNN…KEND). Residues 45-57 (NSSDDINNNNNNN) show a composition bias toward low complexity. Positions 58–100 (NDDDDDNDDYDDSDDENSDSDYDDYDDSDDENSDDEFYSDDED) are enriched in acidic residues. A compositionally biased stretch (low complexity) spans 191–301 (NNLTNSNNSN…NKELIDNNNN (111 aa)). Residues 273–309 (NNNNNISNNKINKINNNNNNKELIDNNNNNKDKENDL) adopt a coiled-coil conformation. The 373-residue stretch at 319–691 (WKKGSCIERK…AGILLKHPFL (373 aa)) folds into the Protein kinase 1 domain. Residues 325–333 (IERKSNYSV) and Lys-348 each bind ATP. The tract at residues 358 to 398 (SSSSLTSLSNSNNNNSNNNNNNNNNNNNNNNNNNNNNNNNN) is disordered. Residues 359-398 (SSSLTSLSNSNNNNSNNNNNNNNNNNNNNNNNNNNNNNNN) are compositionally biased toward low complexity. The Proton acceptor role is filled by Asp-498. Disordered regions lie at residues 741–768 (KSQT…NGSN) and 782–870 (PLAT…MTPL). The span at 746–768 (NNNNDNNNLASSNELLSSSNGSN) shows a compositional bias: low complexity. Positions 782–791 (PLATSSSLDN) are enriched in polar residues. Over residues 793 to 805 (TPPPSRPISPKPS) the composition is skewed to pro residues. Low complexity predominate over residues 841–870 (PQQNFNTPPTTTTTTTTPTATPTTPTMTPL). The 589-residue stretch at 894–1482 (FEEIEMIGKG…TKQLLESGLL (589 aa)) folds into the Protein kinase 2 domain. Residues 900–908 (IGKGGFGVV) and Lys-923 contribute to the ATP site. A compositionally biased stretch (low complexity) spans 1053–1094 (TLSSSNTSSSSSLLSNNKSKILNTSKSTSTNTSTSTSTSNTN). The segment at 1053–1259 (TLSSSNTSSS…SSSRKKPPKE (207 aa)) is disordered. Positions 1095-1106 (KNKKISKKKKSK) are enriched in basic residues. Residues 1156 to 1185 (NNNNNNDNNNNYHSDNESDSFSGSISMSDG) show a composition bias toward low complexity. Over residues 1206–1233 (DENENDDDDEEDDDDEYDEEDDDYETFD) the composition is skewed to acidic residues. The segment covering 1242–1251 (SNNSKLSTSS) has biased composition (low complexity). Catalysis depends on Asp-1313, which acts as the Proton acceptor. Disordered regions lie at residues 1343–1370 (KSDD…TAQQ) and 2048–2104 (GSGG…QQTS). A compositionally biased stretch (low complexity) spans 1347-1368 (LNSSTSNTANNINLSSSTNSTA). The segment covering 2048-2072 (GSGGSGGSGGGSSMSSGGGGGGNSN) has biased composition (gly residues). A compositionally biased stretch (low complexity) spans 2085–2099 (SNQSTSSSGNSNNSN).

It belongs to the protein kinase superfamily. Ser/Thr protein kinase family.

The enzyme catalyses L-seryl-[protein] + ATP = O-phospho-L-seryl-[protein] + ADP + H(+). The catalysed reaction is L-threonyl-[protein] + ATP = O-phospho-L-threonyl-[protein] + ADP + H(+). Phosphorylates eIF2-alpha, from 1 to 7 hours after the onset of development or during the preaggregation state, resulting in a shift from polysomes to free ribosomes for bulk mRNA. This Dictyostelium discoideum (Social amoeba) protein is Probable serine/threonine-protein kinase ifkA (ifkA).